Here is a 354-residue protein sequence, read N- to C-terminus: Ion-translocating oxidoreductase complex subunit D (354 aa).

The next 3 helical transmembrane spans lie at 9–28, 67–87, and 117–137; these read IMLH…LYLF, LLSG…WIAV, and VALL…LPLG. An FMN phosphoryl threonine modification is found at T165. 5 helical membrane passes run 200 to 220, 222 to 242, 249 to 269, 277 to 297, and 301 to 321; these read GSLG…LLAL, IIHW…AALA, VHGG…ALFI, PISR…VFVI, and GNFP…VPLI.

The protein belongs to the NqrB/RnfD family. As to quaternary structure, the complex is composed of six subunits: RnfA, RnfB, RnfC, RnfD, RnfE and RnfG. Requires FMN as cofactor.

It is found in the cell inner membrane. Part of a membrane-bound complex that couples electron transfer with translocation of ions across the membrane. This chain is Ion-translocating oxidoreductase complex subunit D, found in Stutzerimonas stutzeri (Pseudomonas stutzeri).